A 159-amino-acid polypeptide reads, in one-letter code: Ribosomal RNA large subunit methyltransferase H (159 aa).

S-adenosyl-L-methionine-binding positions include L76, G107, and 126–131; that span reads LSKLTM.

It belongs to the RNA methyltransferase RlmH family. In terms of assembly, homodimer.

It localises to the cytoplasm. The enzyme catalyses pseudouridine(1915) in 23S rRNA + S-adenosyl-L-methionine = N(3)-methylpseudouridine(1915) in 23S rRNA + S-adenosyl-L-homocysteine + H(+). Specifically methylates the pseudouridine at position 1915 (m3Psi1915) in 23S rRNA. This is Ribosomal RNA large subunit methyltransferase H from Acinetobacter baumannii (strain SDF).